The following is a 447-amino-acid chain: NAC domain containing protein 50 (447 aa).

A disordered region spans residues 1–21; sequence MGRESLAVVSSPPSATAPSTA. The NAC domain maps to 27 to 178; that stretch reads LAPGFRFHPT…AYVLCRVFHK (152 aa). Residues 126–184 mediate DNA binding; sequence LGMKKTLVFHSGRAPDGLRTNWVMHEYRLVEYETETNGSLLQDAYVLCRVFHKNNIGPP. 2 disordered regions span residues 246-303 and 371-392; these read DATP…NKEA and KENQQKEETSPPSPIASPEEKV. Residues 281–293 are compositionally biased toward basic and acidic residues; that stretch reads TLKREHAEEDERP. The stretch at 392 to 447 forms a coiled coil; that stretch reads VNDLQKEVHQMSVERETFKLEMMSAEAMISILQSRIDALRQENEELKKKNASGQAS.

In terms of assembly, interacts with JMJ14 and NAC052. Mostly expressed in floral organs, and, at low levels, in other organs.

The protein resides in the nucleus. Functionally, transcriptional repressor that binds to the motif 5'-(C/T)A(C/A)G-3' in the promoter of target genes. Also binds to the 5'-CTTGNNNNNCAAG-3' consensus sequence in chromatin. Can bind to the mitochondrial dysfunction motif (MDM) present in the upstream regions of mitochondrial dysfunction stimulon (MDS) genes involved in mitochondrial retrograde regulation (MRR). Together with NAC051/NAC052 and JMJ14, regulates gene expression and flowering time by associating with the histone demethylase JMJ14, probably by the promotion of RNA-mediated gene silencing. The polypeptide is NAC domain containing protein 50 (Arabidopsis thaliana (Mouse-ear cress)).